The primary structure comprises 147 residues: Ponticulin-like protein C1 (147 aa).

Positions 1–20 (MKFTKSLLLLIVAVFASSNA) are cleaved as a signal peptide. A lipid anchor (GPI-like-anchor amidated asparagine) is attached at Asn118. Asn118 carries N-linked (GlcNAc...) asparagine glycosylation. Positions 119 to 147 (SSESDSSDSTRIGASFALAASVLLSMLAI) are cleaved as a propeptide — removed in mature form.

Belongs to the ponticulin family. Post-translationally, the GPI-like-anchor contains a phosphoceramide group, rather than a phosphatidyl group.

It is found in the cell membrane. The protein is Ponticulin-like protein C1 (ponC1) of Dictyostelium discoideum (Social amoeba).